A 493-amino-acid polypeptide reads, in one-letter code: Cysteine--tRNA ligase (493 aa).

Residue cysteine 41 participates in Zn(2+) binding. Residues proline 43–asparagine 53 carry the 'HIGH' region motif. 3 residues coordinate Zn(2+): cysteine 231, histidine 256, and glutamate 260. The 'KMSKS' region motif lies at lysine 296–serine 300. Residue lysine 299 coordinates ATP.

The protein belongs to the class-I aminoacyl-tRNA synthetase family. In terms of assembly, monomer. Zn(2+) is required as a cofactor.

Its subcellular location is the cytoplasm. It catalyses the reaction tRNA(Cys) + L-cysteine + ATP = L-cysteinyl-tRNA(Cys) + AMP + diphosphate. This Novosphingobium aromaticivorans (strain ATCC 700278 / DSM 12444 / CCUG 56034 / CIP 105152 / NBRC 16084 / F199) protein is Cysteine--tRNA ligase.